The following is a 159-amino-acid chain: Intron-encoded endonuclease ai4 (159 aa).

The protein belongs to the LAGLIDADG endonuclease family.

The protein localises to the mitochondrion. Its function is as follows. Mitochondrial DNA endonuclease involved in intron homing. The protein is Intron-encoded endonuclease ai4 (ai4) of Dictyostelium discoideum (Social amoeba).